A 247-amino-acid polypeptide reads, in one-letter code: PF03932 family protein CutC (247 aa).

Belongs to the CutC family.

Its subcellular location is the cytoplasm. This chain is PF03932 family protein CutC, found in Chromobacterium violaceum (strain ATCC 12472 / DSM 30191 / JCM 1249 / CCUG 213 / NBRC 12614 / NCIMB 9131 / NCTC 9757 / MK).